Here is a 63-residue protein sequence, read N- to C-terminus: Disintegrin schistatin-like subunit B (63 aa).

The region spanning 1–63 (NSVNPCCDPQ…TPDCPRNRYN (63 aa)) is the Disintegrin domain. Intrachain disulfides connect Cys6-Cys29, Cys20-Cys26, Cys25-Cys50, and Cys38-Cys57. The Cell attachment site motif lies at 42-44 (RGD).

It belongs to the disintegrin family. Dimeric disintegrin subfamily. As to quaternary structure, heterodimer with subunit A; disulfide-linked. Expressed by the venom gland.

Its subcellular location is the secreted. May bind to both alpha-IIb/beta-3 (ITGA2B/ITGB3) and alpha-V/beta-3 (ITGAV/ITGB3) integrins, and may inhibit platelet aggregation. This Echis carinatus (Saw-scaled viper) protein is Disintegrin schistatin-like subunit B.